The following is a 381-amino-acid chain: MSKRDFYEVLGVSRDASERDIKKAYKRLAMKFHPDRNQGDESAADKFKEVKEAYEILTDPQKKAAYDQYGHAAFEQGGGGFGGGFGGGGADFGDIFGDVFGDIFGGGRRGGGHARPQRGADLRYNMELSLEEAVRGVSKEIEVPTLVHCDTCEGTGAKKGTSAETCGTCHGHGQVQMRQGFFAVQQTCPTCHGKGKIIKDPCNVCHGQGRKQKTKTLNVKIPAGVDTGDRIRLSGEGEAGERGAPAGDLYVQVHVREHHIFEREGNNLYCEVPVSFAMAALGGEVEVPTLDGRVNLKVPSETQTGRMFRMRGKGVKGVRGGAIGDLIVKLVVETPVNLSSRQKELLKEFEESCCGEAATKHKPKSEGFFNGVKKFFDDLTS.

The J domain maps to 5–70; that stretch reads DFYEVLGVSR…QKKAAYDQYG (66 aa). The CR-type zinc finger occupies 136 to 214; the sequence is GVSKEIEVPT…CHGQGRKQKT (79 aa). Positions 149, 152, 166, 169, 188, 191, 202, and 205 each coordinate Zn(2+). CXXCXGXG motif repeat units lie at residues 149–156, 166–173, 188–195, and 202–209; these read CDTCEGTG, CGTCHGHG, CPTCHGKG, and CNVCHGQG.

Belongs to the DnaJ family. As to quaternary structure, homodimer. Requires Zn(2+) as cofactor.

Its subcellular location is the cytoplasm. Its function is as follows. Participates actively in the response to hyperosmotic and heat shock by preventing the aggregation of stress-denatured proteins and by disaggregating proteins, also in an autonomous, DnaK-independent fashion. Unfolded proteins bind initially to DnaJ; upon interaction with the DnaJ-bound protein, DnaK hydrolyzes its bound ATP, resulting in the formation of a stable complex. GrpE releases ADP from DnaK; ATP binding to DnaK triggers the release of the substrate protein, thus completing the reaction cycle. Several rounds of ATP-dependent interactions between DnaJ, DnaK and GrpE are required for fully efficient folding. Also involved, together with DnaK and GrpE, in the DNA replication of plasmids through activation of initiation proteins. The sequence is that of Chaperone protein DnaJ from Vibrio vulnificus (strain CMCP6).